Here is a 98-residue protein sequence, read N- to C-terminus: Prolactin-releasing peptide (98 aa).

The N-terminal stretch at 1–22 (MKAVGAWLLCLLLLGLALQGAA) is a signal peptide. F53 is modified (phenylalanine amide). A propeptide spanning residues 58–98 (AAPGDGPRPGPRRELACIPLEGGAEPSRALLGRLTAQLVQE) is cleaved from the precursor.

As to expression, more abundantly expressed in the brainstem than the hypothalamus.

The protein resides in the secreted. Functionally, stimulates prolactin (PRL) release and regulates the expression of prolactin through its receptor GPR10. May stimulate lactotrophs directly to secrete PRL. This chain is Prolactin-releasing peptide (PRLH), found in Ovis aries (Sheep).